A 400-amino-acid polypeptide reads, in one-letter code: Cell division protein FtsZ 2 (400 aa).

Basic and acidic residues predominate over residues 1–16 (MQDIVREAMERDEAER). Residues 1–30 (MQDIVREAMERDEAERQTQSSLEDSDDQFG) are disordered. GTP is bound by residues 41–45 (GAGNN), 128–130 (GTG), glutamate 159, arginine 162, and aspartate 205. The tract at residues 338–400 (VLGPSTQKQA…EKNNGLDVIR (63 aa)) is disordered. Low complexity predominate over residues 352–364 (QSIQSRESQQQHS). Over residues 365–382 (GSEFDSSERAQTAQSGTW) the composition is skewed to polar residues. Residues 385–400 (GGRDEVEKNNGLDVIR) are compositionally biased toward basic and acidic residues.

Belongs to the FtsZ family. As to quaternary structure, homodimer. Polymerizes to form a dynamic ring structure in a strictly GTP-dependent manner. Interacts directly with several other division proteins. Interacts with SepF.

It localises to the cytoplasm. Its function is as follows. Essential cell division protein that forms a contractile ring structure (Z ring) at the future cell division site. The regulation of the ring assembly controls the timing and the location of cell division. One of the functions of the FtsZ ring is to recruit other cell division proteins to the septum to produce a new cell wall between the dividing cells. Binds GTP and shows GTPase activity. Required for division ring constriction. The polypeptide is Cell division protein FtsZ 2 (Haloferax volcanii (strain ATCC 29605 / DSM 3757 / JCM 8879 / NBRC 14742 / NCIMB 2012 / VKM B-1768 / DS2) (Halobacterium volcanii)).